Consider the following 717-residue polypeptide: Protein E2 homolog (717 aa).

Belongs to the poxviridae E2 protein family.

The sequence is that of Protein E2 homolog from Fowlpox virus (strain NVSL) (FPV).